We begin with the raw amino-acid sequence, 255 residues long: Probable membrane transporter protein HI_0198 (255 aa).

The next 8 membrane-spanning stretches (helical) occupy residues 7 to 27, 28 to 48, 76 to 96, 99 to 119, 132 to 152, 153 to 173, 191 to 211, and 235 to 255; these read LLAILFCVGFVASFIDAIAGG, GGLITIPALLMTGMPPAMALG, IWFILIWVFLGSALGTLLIQS, VAIFKKMLPFLILAIGLYFLF, LSYLLFGLLVSPFLGFYDGFF, GPGTGSIMSLACVTLLGFNLP, FALFLLGGQILWKVGFVMMAG, and VVIMSFMMTAKMVYDQGWFHF.

The protein belongs to the 4-toluene sulfonate uptake permease (TSUP) (TC 2.A.102) family.

It localises to the cell membrane. This chain is Probable membrane transporter protein HI_0198, found in Haemophilus influenzae (strain ATCC 51907 / DSM 11121 / KW20 / Rd).